We begin with the raw amino-acid sequence, 254 residues long: 14-3-3-like protein GF14 epsilon (254 aa).

Residues Ser-65 and Ser-188 each carry the phosphoserine modification.

This sequence belongs to the 14-3-3 family. As to quaternary structure, interacts with DREB1A and DREB1B in the nucleus. Interacts with CINV1.

It localises to the nucleus. The protein localises to the cytoplasm. Functionally, is associated with a DNA binding complex that binds to the G box, a well-characterized cis-acting DNA regulatory element found in plant genes. The sequence is that of 14-3-3-like protein GF14 epsilon (GRF10) from Arabidopsis thaliana (Mouse-ear cress).